The primary structure comprises 1184 residues: uncharacterized protein (1184 aa).

2 disordered regions span residues 115–152 (ETSSQPSQEVYHPHAGKAAQSAHVMNSTESRPSSAHVS) and 397–426 (TYKPKSSVNGSVYRSKSVKSTTSHNKVPER). Composition is skewed to polar residues over residues 137–152 (HVMNSTESRPSSAHVS) and 397–421 (TYKPKSSVNGSVYRSKSVKSTTSHN). S686 carries the post-translational modification Phosphoserine. Basic and acidic residues-rich tracts occupy residues 705–767 (LSER…ESAH), 783–792 (FEHETEPSHY), 849–863 (SHAHDNAVNEKRDLG), and 891–902 (YLHDEKTRDTLT). Disordered stretches follow at residues 705–870 (LSER…FGDV) and 890–1017 (DYLH…SSPK). S905 bears the Phosphoserine mark. Residues 920-932 (EDHPHASEAERAH) are compositionally biased toward basic and acidic residues. Positions 941–950 (SSESSPESQS) are enriched in low complexity. Residues 999–1011 (PRERLDDNAKEIL) show a composition bias toward basic and acidic residues. Phosphoserine is present on S1018. Disordered regions lie at residues 1029-1107 (NRKD…IGTQ) and 1135-1154 (DVDNVVSGHSNVNGVSKSRP). Over residues 1032 to 1045 (DKAAVKRMLEEDSS) the composition is skewed to basic and acidic residues. The span at 1073–1107 (PAVNNSTKPVAVTSKNGHSRNGSHAAHSNNVIGTQ) shows a compositional bias: polar residues. Residues 1138-1150 (NVVSGHSNVNGVS) show a composition bias toward low complexity.

It is found in the cytoplasm. This is an uncharacterized protein from Schizosaccharomyces pombe (strain 972 / ATCC 24843) (Fission yeast).